Consider the following 137-residue polypeptide: Peptide methionine sulfoxide reductase MsrB (137 aa).

The MsrB domain occupies 7–129 (AEELKKNLSE…NSASLRFTDG (123 aa)). Residues Cys-46, Cys-49, Cys-95, and Cys-98 each contribute to the Zn(2+) site. Cys-118 functions as the Nucleophile in the catalytic mechanism.

Belongs to the MsrB Met sulfoxide reductase family. The cofactor is Zn(2+).

It carries out the reaction L-methionyl-[protein] + [thioredoxin]-disulfide + H2O = L-methionyl-(R)-S-oxide-[protein] + [thioredoxin]-dithiol. This chain is Peptide methionine sulfoxide reductase MsrB, found in Escherichia coli O8 (strain IAI1).